The chain runs to 1316 residues: DNA-directed RNA polymerase subunit beta' (1316 aa).

The Zn(2+) site is built by C60, C62, C75, and C78. The tract at residues 183-209 is disordered; the sequence is ELEEEGAKSDVRRKVRDGGEREMRQLR. D535, D537, and D539 together coordinate Mg(2+). Zn(2+) is bound by residues C890, C966, C973, and C976.

The protein belongs to the RNA polymerase beta' chain family. As to quaternary structure, the RNAP catalytic core consists of 2 alpha, 1 beta, 1 beta' and 1 omega subunit. When a sigma factor is associated with the core the holoenzyme is formed, which can initiate transcription. Mg(2+) is required as a cofactor. Zn(2+) serves as cofactor.

It catalyses the reaction RNA(n) + a ribonucleoside 5'-triphosphate = RNA(n+1) + diphosphate. Its function is as follows. DNA-dependent RNA polymerase catalyzes the transcription of DNA into RNA using the four ribonucleoside triphosphates as substrates. This chain is DNA-directed RNA polymerase subunit beta', found in Mycolicibacterium gilvum (strain PYR-GCK) (Mycobacterium gilvum (strain PYR-GCK)).